We begin with the raw amino-acid sequence, 473 residues long: Probable aspartokinase (473 aa).

ACT domains are found at residues 323–392 (IFGA…FLNN) and 409–473 (VVGA…KTNS).

Belongs to the aspartokinase family.

It carries out the reaction L-aspartate + ATP = 4-phospho-L-aspartate + ADP. It functions in the pathway amino-acid biosynthesis; L-lysine biosynthesis via DAP pathway; (S)-tetrahydrodipicolinate from L-aspartate: step 1/4. Its pathway is amino-acid biosynthesis; L-methionine biosynthesis via de novo pathway; L-homoserine from L-aspartate: step 1/3. It participates in amino-acid biosynthesis; L-threonine biosynthesis; L-threonine from L-aspartate: step 1/5. This Methanocaldococcus jannaschii (strain ATCC 43067 / DSM 2661 / JAL-1 / JCM 10045 / NBRC 100440) (Methanococcus jannaschii) protein is Probable aspartokinase.